A 154-amino-acid chain; its full sequence is MDWAESQFKTCTHGCDWKKISSDSADNRQYVPCVDSGAGRKSPRKVLLRSIEAVFNGSFSGNNRNVRGFLYVSIRDDDGEMRPVLIVPFGGYGYHNDFYYFEGKGKVECDISSDYVAPGIDWSRDMEVSISNSNNCNELCDLKCYVVCSLRIKE.

Belongs to the nanoviridae nuclear shuttle protein family.

The protein resides in the host nucleus. It is found in the host cytoplasm. Functionally, putative nuclear shuttle protein. The sequence is that of Putative nuclear shuttle protein (DNA-N) from Musa (BBTV).